The sequence spans 508 residues: Photosystem II CP47 reaction center protein (508 aa).

Transmembrane regions (helical) follow at residues 21 to 36, 101 to 115, 140 to 156, 203 to 218, 237 to 252, and 457 to 472; these read SVHI…WAGS, IMFS…IWHW, GIHL…FGAF, IAAG…FHLS, VLSS…AFIV, and TFAL…HGAR.

The protein belongs to the PsbB/PsbC family. PsbB subfamily. PSII is composed of 1 copy each of membrane proteins PsbA, PsbB, PsbC, PsbD, PsbE, PsbF, PsbH, PsbI, PsbJ, PsbK, PsbL, PsbM, PsbT, PsbX, PsbY, PsbZ, Psb30/Ycf12, at least 3 peripheral proteins of the oxygen-evolving complex and a large number of cofactors. It forms dimeric complexes. Binds multiple chlorophylls. PSII binds additional chlorophylls, carotenoids and specific lipids. serves as cofactor.

It localises to the plastid. The protein resides in the chloroplast thylakoid membrane. Functionally, one of the components of the core complex of photosystem II (PSII). It binds chlorophyll and helps catalyze the primary light-induced photochemical processes of PSII. PSII is a light-driven water:plastoquinone oxidoreductase, using light energy to abstract electrons from H(2)O, generating O(2) and a proton gradient subsequently used for ATP formation. The chain is Photosystem II CP47 reaction center protein from Pinus koraiensis (Korean pine).